A 392-amino-acid polypeptide reads, in one-letter code: Carbamoyl phosphate synthase small chain (392 aa).

Residues 1-174 (MSKKALLALE…EVIVENPEGD (174 aa)) are CPSase. L-glutamine is bound by residues Ser47, Gly224, and Gly226. The 217-residue stretch at 176 to 392 (SVVVLDSGVK…EFKRLIKEVR (217 aa)) folds into the Glutamine amidotransferase type-1 domain. Cys252 functions as the Nucleophile in the catalytic mechanism. L-glutamine is bound by residues Leu253, Gln256, Asn294, Gly296, and Phe297. Active-site residues include His367 and Glu369.

The protein belongs to the CarA family. In terms of assembly, composed of two chains; the small (or glutamine) chain promotes the hydrolysis of glutamine to ammonia, which is used by the large (or ammonia) chain to synthesize carbamoyl phosphate. Tetramer of heterodimers (alpha,beta)4.

It catalyses the reaction hydrogencarbonate + L-glutamine + 2 ATP + H2O = carbamoyl phosphate + L-glutamate + 2 ADP + phosphate + 2 H(+). It carries out the reaction L-glutamine + H2O = L-glutamate + NH4(+). Its pathway is amino-acid biosynthesis; L-arginine biosynthesis; carbamoyl phosphate from bicarbonate: step 1/1. It functions in the pathway pyrimidine metabolism; UMP biosynthesis via de novo pathway; (S)-dihydroorotate from bicarbonate: step 1/3. Its function is as follows. Small subunit of the glutamine-dependent carbamoyl phosphate synthetase (CPSase). CPSase catalyzes the formation of carbamoyl phosphate from the ammonia moiety of glutamine, carbonate, and phosphate donated by ATP, constituting the first step of 2 biosynthetic pathways, one leading to arginine and/or urea and the other to pyrimidine nucleotides. The small subunit (glutamine amidotransferase) binds and cleaves glutamine to supply the large subunit with the substrate ammonia. This chain is Carbamoyl phosphate synthase small chain, found in Thermotoga maritima (strain ATCC 43589 / DSM 3109 / JCM 10099 / NBRC 100826 / MSB8).